We begin with the raw amino-acid sequence, 306 residues long: Low density lipoprotein receptor adapter protein 1 (306 aa).

Met-1 carries the post-translational modification N-acetylmethionine. Ser-14 is subject to Phosphoserine. The PID domain occupies 44–168; it reads GMVFSLKYLG…VAQAFKVAFE (125 aa). The segment at 178-204 is disordered; that stretch reads EKREKANQEGGDVPGTRRDSTPSLKTS. Ser-197 and Ser-200 each carry phosphoserine. Positions 210–214 match the Clathrin box motif; it reads LLDLE. The segment at 247–274 is AP-2 complex binding; sequence WELDDGLDEAFSRLAQSRTNPQVLDTGL. The [DE]-X(1,2)-F-X-X-[FL]-X-X-X-R motif motif lies at 255-264; sequence EAFSRLAQSR.

In terms of assembly, interacts (via PID domain) with LDLR (via NPXY motifs). Binds to soluble clathrin trimers. Interacts with AP2B1; the interaction mediates the association with the AP-2 complex. Interacts with VLDLR. Interacts with LRP2.

The protein localises to the cytoplasm. Adapter protein (clathrin-associated sorting protein (CLASP)) required for efficient endocytosis of the LDL receptor (LDLR) in polarized cells such as hepatocytes and lymphocytes, but not in non-polarized cells (fibroblasts). May be required for LDL binding and internalization but not for receptor clustering in coated pits. May facilitate the endocytosis of LDLR and LDLR-LDL complexes from coated pits by stabilizing the interaction between the receptor and the structural components of the pits. May also be involved in the internalization of other LDLR family members. Binds to phosphoinositides, which regulate clathrin bud assembly at the cell surface. Required for trafficking of LRP2 to the endocytic recycling compartment which is necessary for LRP2 proteolysis, releasing a tail fragment which translocates to the nucleus and mediates transcriptional repression. In Rattus norvegicus (Rat), this protein is Low density lipoprotein receptor adapter protein 1.